The following is a 240-amino-acid chain: Probable transcriptional regulatory protein PBPRB1582 (240 aa).

It belongs to the TACO1 family.

It is found in the cytoplasm. The protein is Probable transcriptional regulatory protein PBPRB1582 of Photobacterium profundum (strain SS9).